Reading from the N-terminus, the 65-residue chain is Disintegrin CC8A (65 aa).

In terms of domain architecture, Disintegrin spans 1-65 (MNSAHPCCDP…SDCPRNRIKK (65 aa)). Disulfide bonds link Cys7-Cys30, Cys21-Cys27, Cys26-Cys51, and Cys39-Cys58. Positions 43-45 (RGD) match the Cell attachment site motif.

This sequence belongs to the disintegrin family. Dimeric disintegrin subfamily. Heterodimer with CC8B; disulfide-linked. As to expression, expressed by the venom gland.

Its subcellular location is the secreted. Its function is as follows. Inhibits integrins alpha-IIb/beta-3 (ITGA2B/ITGB3), alpha-V/beta-3 (ITGAV/ITGB3), and alpha-5/beta-1 (ITGA5/ITGB1). The chain is Disintegrin CC8A from Cerastes cerastes (Horned desert viper).